The chain runs to 861 residues: Interleukin-12 receptor subunit beta-2 (861 aa).

The signal sequence occupies residues 1–23; that stretch reads MARTVCGCSWALIFIIMSLLVKA. The Extracellular segment spans residues 24-622; the sequence is KIDVCKRGDV…REFCLQGKAN (599 aa). Residues N48, N129, N166, and N271 are each glycosylated (N-linked (GlcNAc...) asparagine). 5 Fibronectin type-III domains span residues 126-224, 226-317, 318-415, 423-520, and 521-620; these read QPQN…VVRP, PPWD…TQTP, EKEP…NIAD, APQQ…KHKA, and PLSG…LQGK. The WSXWS motif motif lies at 305–309; it reads WSDWS. 3 N-linked (GlcNAc...) asparagine glycosylation sites follow: N347, N376, and N480. The chain crosses the membrane as a helical span at residues 623–643; it reads WSTFVAPSICIAVITVGVFSM. The Cytoplasmic segment spans residues 644–861; it reads RCFRQKVFVL…LKMGCGSLML (218 aa). Residues 662–670 carry the Box 1 motif motif; it reads CSREIPDPA. The interval 718 to 761 is disordered; that stretch reads FRRPHHPNWPGKGQRLQGRHASEEDTGSSASSPPPPRALTAETG. A Phosphotyrosine modification is found at Y800.

This sequence belongs to the type I cytokine receptor family. Type 2 subfamily. Heterodimer/heterooligomer; disulfide-linked. The functional high affinity IL12 receptor is composed of I12RB1 and IL12RB2. Il12RB2 binds JAK2 (via its N-terminal) through a membrane-proximal region of the cytoplasmic domain. In terms of processing, on IL12 stimulation, phosphorylated on C-terminal tyrosine residues.

Its subcellular location is the membrane. Its function is as follows. Receptor for interleukin-12. This subunit is the signaling component coupling to the JAK2/STAT4 pathway. The sequence is that of Interleukin-12 receptor subunit beta-2 (IL12RB2) from Sus scrofa (Pig).